The primary structure comprises 672 residues: Serine/threonine-protein kinase ppk16 (672 aa).

Residues 31–279 (YRIESVVGEG…IDQIISHPYF (249 aa)) enclose the Protein kinase domain. ATP is bound by residues 37-45 (VGEGSFGKV) and Lys60. The active-site Proton acceptor is the Asp148. Ser231 carries the post-translational modification Phosphoserine. Polar residues predominate over residues 375-384 (VSVMSNNQDS). Disordered stretches follow at residues 375–396 (VSVMSNNQDSLKSRHTSSDSSN), 416–436 (DTLSSSAIRPRTPSPSAENYL), 464–572 (NSFG…YSNV), and 632–672 (SGRK…TDLL). Residues 472 to 487 (NLPQTTHVDTGEQNTP) are compositionally biased toward polar residues. Over residues 508–523 (SNSQNSPSKSSNLSIN) the composition is skewed to low complexity. Positions 531-541 (LQNTVISPQPT) are enriched in polar residues. 2 stretches are compositionally biased toward low complexity: residues 549 to 572 (RSLSGRSSVASSRNSSRTRSYSNV) and 639 to 649 (SSSSLMFNQSS).

Belongs to the protein kinase superfamily. Ser/Thr protein kinase family.

The protein resides in the cytoplasm. The catalysed reaction is L-seryl-[protein] + ATP = O-phospho-L-seryl-[protein] + ADP + H(+). It carries out the reaction L-threonyl-[protein] + ATP = O-phospho-L-threonyl-[protein] + ADP + H(+). Has a role in meiosis. This chain is Serine/threonine-protein kinase ppk16 (ppk16), found in Schizosaccharomyces pombe (strain 972 / ATCC 24843) (Fission yeast).